A 168-amino-acid chain; its full sequence is Peptidyl-Lys metalloendopeptidase (168 aa).

Intrachain disulfides connect C6-C76 and C78-C98. Zn(2+) is bound at residue H118. E119 is an active-site residue. 2 residues coordinate Zn(2+): H122 and D131.

Zn(2+) is required as a cofactor.

The protein resides in the secreted. It carries out the reaction Preferential cleavage in proteins: -Xaa-|-Lys- (in which Xaa may be Pro).. Its activity is regulated as follows. Inhibited by chelating agents such as EDTA and 1,10-phenanthroline. The polypeptide is Peptidyl-Lys metalloendopeptidase (MEP) (Pleurotus ostreatus (Oyster mushroom)).